Consider the following 171-residue polypeptide: Homeobox protein engrailed-1-B (171 aa).

2 disordered regions span residues 1 to 41 (EDPG…NAAP) and 60 to 86 (YSDR…KRPR). Residues 15–29 (PDSDTPSDSSKGSDS) show a composition bias toward low complexity. The homeobox DNA-binding region spans 82–141 (DKRPRTAFTAEQLQRLKAEFQANRYITEQRRQTLAQELSLNESQIKIWFQNKRAKIKKAS).

The protein belongs to the engrailed homeobox family.

It localises to the nucleus. In terms of biological role, required for proper formation of the apical ectodermal ridge and correct dorsal-ventral patterning in the limb. The protein is Homeobox protein engrailed-1-B (en1-b) of Xenopus laevis (African clawed frog).